A 97-amino-acid chain; its full sequence is MSRKCELTGVGVLYGNNVSHSQRKTRRRFEPNLRSVKFISDITTAEYRLSVSARCISSVEKAGGFDAYMLKANNDALSTTAKAIKKKIIQTKMAKSL.

This sequence belongs to the bacterial ribosomal protein bL28 family.

This Rickettsia bellii (strain OSU 85-389) protein is Large ribosomal subunit protein bL28.